The following is a 94-amino-acid chain: Long neurotoxin LNTX37 (94 aa).

Positions Met-1 to Thr-21 are cleaved as a signal peptide. Cystine bridges form between Cys-24/Cys-43, Cys-36/Cys-64, Cys-49/Cys-53, Cys-68/Cys-79, and Cys-80/Cys-85.

This sequence belongs to the three-finger toxin family. Long-chain subfamily. Type II alpha-neurotoxin sub-subfamily. In terms of tissue distribution, expressed by the venom gland.

The protein resides in the secreted. Binds with high affinity to muscular (alpha-1/CHRNA1) and neuronal (alpha-7/CHRNA7) nicotinic acetylcholine receptor (nAChR) and inhibits acetylcholine from binding to the receptor, thereby impairing neuromuscular and neuronal transmission. The protein is Long neurotoxin LNTX37 of Ophiophagus hannah (King cobra).